The sequence spans 400 residues: Proline-rich protein 5 (400 aa).

The segment at 301–358 (TDSTSKLSMAGTKPPGEGERPPISNGQFPPLHNLSDSQQGLYNSQRDSPLLPAPSSSP) is disordered. Polar residues predominate over residues 334–347 (LSDSQQGLYNSQRD). Residues 348–358 (SPLLPAPSSSP) show a composition bias toward low complexity.

It belongs to the PROTOR family. In terms of assembly, associated component of the mechanistic target of rapamycin complex 2 (mTORC2).

In terms of biological role, associated subunit of mTORC2, which regulates cell growth and survival in response to hormonal signals. The sequence is that of Proline-rich protein 5 (prr5) from Xenopus laevis (African clawed frog).